The following is a 370-amino-acid chain: D-aspartate oxidase (370 aa).

The first 18 residues, Met1 to Ala18, serve as a signal peptide directing secretion. FAD-binding residues include Ile13, Glu42, Ala63, Ser64, and Gly68. N-linked (GlcNAc...) asparagine glycosylation occurs at Asn207. FAD is bound by residues Arg308, Gly338, and Tyr339.

The protein belongs to the DAMOX/DASOX family. In terms of assembly, monomer. FAD is required as a cofactor.

The catalysed reaction is D-aspartate + O2 + H2O = oxaloacetate + H2O2 + NH4(+). It catalyses the reaction D-glutamate + O2 + H2O = H2O2 + 2-oxoglutarate + NH4(+). Its function is as follows. Selectively catalyzes the oxidative deamination of acidic amino acids. Protects the organism from the toxicity of D-amino acids. Enables the organism to utilize D-amino acids as a source of nutrients. The chain is D-aspartate oxidase from Talaromyces thermophilus.